Reading from the N-terminus, the 771-residue chain is Post-GPI attachment to proteins factor 6 (771 aa).

The N-terminal stretch at 1–34 is a signal peptide; it reads MGRAGTGTGGEAVAAVVAGPLLLLLLARPPPASA. Residues 35–545 lie on the Extracellular side of the membrane; that stretch reads GYSGKSEVGL…STAQTVAQQR (511 aa). Asn-144 carries N-linked (GlcNAc...) asparagine glycosylation. Positions 322 to 343 are disordered; sequence FNASSGLLSPSPDHQDLGRSGR. Residues 334 to 343 are compositionally biased toward basic and acidic residues; that stretch reads DHQDLGRSGR. Asn-407 and Asn-431 each carry an N-linked (GlcNAc...) asparagine glycan. The EGF-like domain occupies 497–533; it reads PCLNDCGPYGQCLLLRRHSYLYASCSCKAGWRGWSCT. 3 disulfides stabilise this stretch: Cys-498–Cys-508, Cys-502–Cys-521, and Cys-523–Cys-532. A helical membrane pass occupies residues 546-566; it reads AATLLLTLSNLMFLAPIAVSV. Residues 567-568 are Cytoplasmic-facing; that stretch reads RR. A helical membrane pass occupies residues 569-589; that stretch reads FFLVEASVYAYTMFFSTFYHA. Residues 590–605 are Extracellular-facing; that stretch reads CDQPGEAVLCILSYDT. The chain crosses the membrane as a helical span at residues 606-626; it reads LQYCDFLGSGAAIWVTILCMA. Over 627–629 the chain is Cytoplasmic; the sequence is RLK. Residues 630-650 form a helical membrane-spanning segment; the sequence is TVLKYVLFLLGTLVIAMSLQL. The Extracellular segment spans residues 651–653; it reads DRR. A helical transmembrane segment spans residues 654-674; that stretch reads GMWNMLGPCLFAFVIMASMWA. The Cytoplasmic segment spans residues 675–690; that stretch reads YRCGHRRQCYPTSWQR. A helical membrane pass occupies residues 691-711; sequence WAFYLLPGVSMASVGIAIYTS. Over 712–717 the chain is Extracellular; sequence MMTSDN. Residues 718–738 traverse the membrane as a helical segment; it reads YYYTHSIWHILLAGSAALLLP. Over 739 to 771 the chain is Cytoplasmic; sequence PPDQPAEPWACSQKFPCHYQICKNDREELYAVT.

Belongs to the TMEM8 family. Post-translationally, glycosylated. As to expression, expressed in pancreas, placenta, spleen, liver, kidney, bone marrow, peripheral blood leukocytes and tonsil.

It localises to the cell membrane. It is found in the lysosome membrane. It carries out the reaction a 1,2-diacyl-sn-glycero-3-phosphocholine + H2O = a 1-acyl-sn-glycero-3-phosphocholine + a fatty acid + H(+). In terms of biological role, involved in the lipid remodeling steps of GPI-anchor maturation. Lipid remodeling steps consist in the generation of 2 saturated fatty chains at the sn-2 position of GPI-anchor proteins (GPI-AP). Has phospholipase A2 activity that removes an acyl-chain at the sn-2 position of GPI-anchors during the remodeling of GPI. Required for the shedding of the GPI-AP CRIPTO, but not CFC1, at the cell surface. Shedding of CRIPTO modulates Nodal signaling by allowing soluble CRIPTO to act as a Nodal coreceptor on other cells. Also indirectly involved in the translocation of RAC1 from the cytosol to the plasma membrane by maintaining the steady state amount of CAV1-enriched plasma membrane subdomains, stabilizing RAC1 at the plasma membrane. In contrast to myomaker (TMEM8C), has no fusogenic activity. This Homo sapiens (Human) protein is Post-GPI attachment to proteins factor 6.